The chain runs to 293 residues: tRNA (guanine-N(7)-)-methyltransferase (293 aa).

S-adenosyl-L-methionine-binding positions include glycine 105, 128–129 (EI), 163–164 (NT), and cysteine 183. Aspartate 186 is a catalytic residue. 261 to 263 (TEE) contacts S-adenosyl-L-methionine.

This sequence belongs to the class I-like SAM-binding methyltransferase superfamily. TrmB family. As to quaternary structure, forms a complex with trm82.

It localises to the nucleus. It carries out the reaction guanosine(46) in tRNA + S-adenosyl-L-methionine = N(7)-methylguanosine(46) in tRNA + S-adenosyl-L-homocysteine. The protein operates within tRNA modification; N(7)-methylguanine-tRNA biosynthesis. Functionally, catalyzes the formation of N(7)-methylguanine at position 46 (m7G46) in tRNA. This chain is tRNA (guanine-N(7)-)-methyltransferase (trm8), found in Neurospora crassa (strain ATCC 24698 / 74-OR23-1A / CBS 708.71 / DSM 1257 / FGSC 987).